The sequence spans 324 residues: ATP phosphoribosyltransferase regulatory subunit (324 aa).

It belongs to the class-II aminoacyl-tRNA synthetase family. HisZ subfamily. In terms of assembly, heteromultimer composed of HisG and HisZ subunits.

Its subcellular location is the cytoplasm. It functions in the pathway amino-acid biosynthesis; L-histidine biosynthesis; L-histidine from 5-phospho-alpha-D-ribose 1-diphosphate: step 1/9. Functionally, required for the first step of histidine biosynthesis. May allow the feedback regulation of ATP phosphoribosyltransferase activity by histidine. The protein is ATP phosphoribosyltransferase regulatory subunit of Carboxydothermus hydrogenoformans (strain ATCC BAA-161 / DSM 6008 / Z-2901).